Here is a 201-residue protein sequence, read N- to C-terminus: Small ribosomal subunit protein uS4 (201 aa).

The tract at residues 20-46 (SGTGKELSRRPYAPGQHGQDRRGSLSE) is disordered. An S4 RNA-binding domain is found at 93-156 (RRLDNVVYRL…KDLQIVKEAL (64 aa)).

This sequence belongs to the universal ribosomal protein uS4 family. As to quaternary structure, part of the 30S ribosomal subunit. Contacts protein S5. The interaction surface between S4 and S5 is involved in control of translational fidelity.

Its function is as follows. One of the primary rRNA binding proteins, it binds directly to 16S rRNA where it nucleates assembly of the body of the 30S subunit. Functionally, with S5 and S12 plays an important role in translational accuracy. In Ligilactobacillus salivarius (strain UCC118) (Lactobacillus salivarius), this protein is Small ribosomal subunit protein uS4.